A 115-amino-acid polypeptide reads, in one-letter code: Non-specific lipid-transfer protein (115 aa).

Residues 1 to 24 form the signal peptide; the sequence is MASSAVIKLALVVALCMAVSVAHA. Disulfide bonds link C27/C74, C37/C51, C52/C97, and C72/C111.

The protein belongs to the plant LTP family.

In terms of biological role, plant non-specific lipid-transfer proteins transfer phospholipids as well as galactolipids across membranes. May play a role in wax or cutin deposition in the cell walls of expanding epidermal cells and certain secretory tissues. In Pyrus communis (Pear), this protein is Non-specific lipid-transfer protein.